Reading from the N-terminus, the 118-residue chain is Large ribosomal subunit protein bL20 (118 aa).

The protein belongs to the bacterial ribosomal protein bL20 family.

Binds directly to 23S ribosomal RNA and is necessary for the in vitro assembly process of the 50S ribosomal subunit. It is not involved in the protein synthesizing functions of that subunit. The polypeptide is Large ribosomal subunit protein bL20 (Klebsiella pneumoniae (strain 342)).